A 354-amino-acid chain; its full sequence is Uroporphyrinogen decarboxylase (354 aa).

Substrate contacts are provided by residues 27–31 (RQAGR), Asp-77, Tyr-153, Thr-208, and His-326.

The protein belongs to the uroporphyrinogen decarboxylase family. As to quaternary structure, homodimer.

It localises to the cytoplasm. It catalyses the reaction uroporphyrinogen III + 4 H(+) = coproporphyrinogen III + 4 CO2. The protein operates within porphyrin-containing compound metabolism; protoporphyrin-IX biosynthesis; coproporphyrinogen-III from 5-aminolevulinate: step 4/4. Its function is as follows. Catalyzes the decarboxylation of four acetate groups of uroporphyrinogen-III to yield coproporphyrinogen-III. This chain is Uroporphyrinogen decarboxylase, found in Neisseria meningitidis serogroup C (strain 053442).